Consider the following 107-residue polypeptide: U1-lycotoxin-Ls1m (107 aa).

An N-terminal signal peptide occupies residues 1–20 (MMKVLVVVALLVTLISYSSS). Positions 21–41 (EGIDDLEADELLSLMANEQTR) are excised as a propeptide. Cystine bridges form between cysteine 44–cysteine 59, cysteine 51–cysteine 68, cysteine 58–cysteine 86, and cysteine 70–cysteine 84.

It belongs to the neurotoxin 19 (CSTX) family. 04 (U1-Lctx) subfamily. In terms of tissue distribution, expressed by the venom gland.

The protein resides in the secreted. The polypeptide is U1-lycotoxin-Ls1m (Lycosa singoriensis (Wolf spider)).